A 730-amino-acid polypeptide reads, in one-letter code: Catalase-peroxidase (730 aa).

Residues 1–25 are disordered; it reads MEEKKCPVTGHTQHTPTGGGTKNKD. Residues 95 to 218 constitute a cross-link (tryptophyl-tyrosyl-methioninium (Trp-Tyr) (with M-244)); the sequence is WHSAGTYRLN…LAAVQMGLIY (124 aa). His-96 serves as the catalytic Proton acceptor. The tryptophyl-tyrosyl-methioninium (Tyr-Met) (with W-95) cross-link spans 218–244; it reads YVNPEGPNGQPSVLASGRDVRDTFKRM. His-259 lines the heme b pocket.

This sequence belongs to the peroxidase family. Peroxidase/catalase subfamily. In terms of assembly, homodimer or homotetramer. Heme b serves as cofactor. In terms of processing, formation of the three residue Trp-Tyr-Met cross-link is important for the catalase, but not the peroxidase activity of the enzyme.

The catalysed reaction is H2O2 + AH2 = A + 2 H2O. It carries out the reaction 2 H2O2 = O2 + 2 H2O. Functionally, bifunctional enzyme with both catalase and broad-spectrum peroxidase activity. The protein is Catalase-peroxidase of Desulfitobacterium hafniense (strain Y51).